The primary structure comprises 217 residues: Large ribosomal subunit protein uL3 (217 aa).

It belongs to the universal ribosomal protein uL3 family. Part of the 50S ribosomal subunit. Forms a cluster with proteins L14 and L19.

Functionally, one of the primary rRNA binding proteins, it binds directly near the 3'-end of the 23S rRNA, where it nucleates assembly of the 50S subunit. The protein is Large ribosomal subunit protein uL3 of Mycobacterium ulcerans (strain Agy99).